The sequence spans 413 residues: Probable inactive allantoicase (413 aa).

It belongs to the allantoicase family.

The function of this enzyme is unclear as allantoicase activity is not known to exist in mammals. The polypeptide is Probable inactive allantoicase (Rattus norvegicus (Rat)).